Here is a 215-residue protein sequence, read N- to C-terminus: Cytochrome b6 (215 aa).

The helical transmembrane segment at 32-52 threads the bilayer; the sequence is IFYCIGGITFTCFLVQVATGF. Cys35 contacts heme c. The heme b site is built by Gly37, Arg83, His86, His100, Arg103, and Arg114. Residues 90 to 110 traverse the membrane as a helical segment; it reads ASMMVLMMVLHVFRVYLTGGF. The next 2 membrane-spanning stretches (helical) occupy residues 116–136 and 186–206; these read LTWVTGVIMAVCTVSFGVTGY and LHTFVLPLLTAVFMLMHFLMI. 2 residues coordinate heme b: His187 and His202. Heme c contacts are provided by Arg207 and Ile211. Ser212 is a heme b binding site.

It belongs to the cytochrome b family. PetB subfamily. In terms of assembly, the 4 large subunits of the cytochrome b6-f complex are cytochrome b6, subunit IV (17 kDa polypeptide, PetD), cytochrome f and the Rieske protein, while the 4 small subunits are PetG, PetL, PetM and PetN. The complex functions as a dimer. Requires heme b as cofactor. The cofactor is heme c. Post-translationally, the N-terminus is blocked.

Its subcellular location is the plastid. It localises to the chloroplast thylakoid membrane. Functionally, component of the cytochrome b6-f complex, which mediates electron transfer between photosystem II (PSII) and photosystem I (PSI), cyclic electron flow around PSI, and state transitions. This chain is Cytochrome b6, found in Chlamydomonas reinhardtii (Chlamydomonas smithii).